The chain runs to 577 residues: Arginine--tRNA ligase (577 aa).

Residues 122–132 carry the 'HIGH' region motif; sequence PNVAKEMHVGH.

Belongs to the class-I aminoacyl-tRNA synthetase family. Monomer.

It localises to the cytoplasm. It catalyses the reaction tRNA(Arg) + L-arginine + ATP = L-arginyl-tRNA(Arg) + AMP + diphosphate. This Shigella flexneri protein is Arginine--tRNA ligase.